Consider the following 987-residue polypeptide: AP3-complex subunit beta-A (987 aa).

Residues 586–662 (QDQLSDLDKQ…ISETSVSADQ (77 aa)) form a disordered region. Acidic residues predominate over residues 603-613 (DGSEESSETGD). Residues 614 to 631 (ENGSSDYDSESSNGSDFS) show a composition bias toward low complexity.

Belongs to the adaptor complexes large subunit family. As to quaternary structure, adaptor protein complex 3 (AP-3) is a heterotetramer composed of two large adaptins (delta-type subunit and beta-type subunit), a medium adaptin (mu-type subunit) and a small adaptin (sigma-type subunit).

Its subcellular location is the cytoplasm. The protein resides in the golgi apparatus. It is found in the cytoplasmic vesicle membrane. Its function is as follows. Part of the AP-3 complex, an adaptor-related complex which seems to be clathrin-associated. The complex is associated with the Golgi region as well as more peripheral structures. It facilitates the budding of vesicles from the Golgi membrane and may be directly involved in trafficking to the vacuole. It also function in maintaining the identity of lytic vacuoles and in regulating the transition between storage and lytic vacuoles. The protein is AP3-complex subunit beta-A (AP3BA) of Arabidopsis thaliana (Mouse-ear cress).